We begin with the raw amino-acid sequence, 322 residues long: GTP 3',8-cyclase (322 aa).

The 213-residue stretch at 5–217 (SYGRVIDYLR…NIIAQKYSFK (213 aa)) folds into the Radical SAM core domain. Arg-14 lines the GTP pocket. Residues Cys-21 and Cys-25 each coordinate [4Fe-4S] cluster. Tyr-27 contributes to the S-adenosyl-L-methionine binding site. [4Fe-4S] cluster is bound at residue Cys-28. Arg-64 serves as a coordination point for GTP. Gly-68 contributes to the S-adenosyl-L-methionine binding site. Thr-95 contacts GTP. An S-adenosyl-L-methionine-binding site is contributed by Ser-119. GTP is bound at residue Lys-155. Met-189 contributes to the S-adenosyl-L-methionine binding site. Residues Cys-249 and Cys-252 each contribute to the [4Fe-4S] cluster site. 254–256 (RIR) provides a ligand contact to GTP. Residue Cys-266 coordinates [4Fe-4S] cluster.

This sequence belongs to the radical SAM superfamily. MoaA family. Monomer and homodimer. It depends on [4Fe-4S] cluster as a cofactor.

It carries out the reaction GTP + AH2 + S-adenosyl-L-methionine = (8S)-3',8-cyclo-7,8-dihydroguanosine 5'-triphosphate + 5'-deoxyadenosine + L-methionine + A + H(+). The protein operates within cofactor biosynthesis; molybdopterin biosynthesis. Catalyzes the cyclization of GTP to (8S)-3',8-cyclo-7,8-dihydroguanosine 5'-triphosphate. The polypeptide is GTP 3',8-cyclase (Campylobacter lari (strain RM2100 / D67 / ATCC BAA-1060)).